The chain runs to 412 residues: Argininosuccinate synthase (412 aa).

Residues 16 to 24 (AYSGGLDTS) and Ala44 each bind ATP. Residues Tyr96 and Ser101 each contribute to the L-citrulline site. Residue Gly126 coordinates ATP. Residues Thr128, Asn132, and Asp133 each contribute to the L-aspartate site. Asn132 lines the L-citrulline pocket. 5 residues coordinate L-citrulline: Arg136, Ser185, Ser194, Glu270, and Tyr282.

Belongs to the argininosuccinate synthase family. Type 1 subfamily. Homotetramer.

It is found in the cytoplasm. The catalysed reaction is L-citrulline + L-aspartate + ATP = 2-(N(omega)-L-arginino)succinate + AMP + diphosphate + H(+). Its pathway is amino-acid biosynthesis; L-arginine biosynthesis; L-arginine from L-ornithine and carbamoyl phosphate: step 2/3. This Shewanella baltica (strain OS195) protein is Argininosuccinate synthase.